The sequence spans 108 residues: Iron-sulfur cluster assembly protein CyaY (108 aa).

Belongs to the frataxin family.

Involved in iron-sulfur (Fe-S) cluster assembly. May act as a regulator of Fe-S biogenesis. In Pseudomonas aeruginosa (strain ATCC 15692 / DSM 22644 / CIP 104116 / JCM 14847 / LMG 12228 / 1C / PRS 101 / PAO1), this protein is Iron-sulfur cluster assembly protein CyaY.